Consider the following 221-residue polypeptide: Cysteine-rich venom protein (221 aa).

A signal peptide is located at residue Gly-1. The SCP domain occupies 21–148 (DLHNSLRRSV…EYKYFYVCQY (128 aa)). 8 disulfides stabilise this stretch: Cys-57–Cys-135, Cys-74–Cys-149, Cys-130–Cys-146, Cys-168–Cys-175, Cys-171–Cys-180, Cys-184–Cys-216, Cys-193–Cys-210, and Cys-201–Cys-214. Residues 184-216 (CTHEDKFTNCKDLVKQGCNNNYLKTNCPASCSC) form the ShKT domain.

It belongs to the CRISP family. In terms of tissue distribution, expressed by the venom gland.

The protein localises to the secreted. Blocks contraction of smooth muscle elicited by high potassium-induced depolarization, but does not block caffeine-stimulated contraction. May target voltage-gated calcium channels in smooth muscle. The protein is Cysteine-rich venom protein of Vipera nikolskii (Nikolsky's adder).